A 428-amino-acid chain; its full sequence is 3-phosphoshikimate 1-carboxyvinyltransferase (428 aa).

3-phosphoshikimate is bound by residues lysine 23, serine 24, and arginine 28. Lysine 23 is a binding site for phosphoenolpyruvate. Phosphoenolpyruvate-binding residues include glycine 92 and arginine 120. 3-phosphoshikimate contacts are provided by serine 165, glutamine 167, aspartate 312, and lysine 339. Glutamine 167 is a binding site for phosphoenolpyruvate. The active-site Proton acceptor is the aspartate 312. The phosphoenolpyruvate site is built by arginine 343 and arginine 384.

Belongs to the EPSP synthase family. In terms of assembly, monomer.

Its subcellular location is the cytoplasm. The catalysed reaction is 3-phosphoshikimate + phosphoenolpyruvate = 5-O-(1-carboxyvinyl)-3-phosphoshikimate + phosphate. The protein operates within metabolic intermediate biosynthesis; chorismate biosynthesis; chorismate from D-erythrose 4-phosphate and phosphoenolpyruvate: step 6/7. Functionally, catalyzes the transfer of the enolpyruvyl moiety of phosphoenolpyruvate (PEP) to the 5-hydroxyl of shikimate-3-phosphate (S3P) to produce enolpyruvyl shikimate-3-phosphate and inorganic phosphate. This is 3-phosphoshikimate 1-carboxyvinyltransferase from Sulfurimonas denitrificans (strain ATCC 33889 / DSM 1251) (Thiomicrospira denitrificans (strain ATCC 33889 / DSM 1251)).